The primary structure comprises 489 residues: Putative ATP-dependent RNA helicase T26G10.1 (489 aa).

Residues K44–Q72 carry the Q motif motif. The 172-residue stretch at L75–V246 folds into the Helicase ATP-binding domain. A88–T95 contributes to the ATP binding site. The short motif at D194–D197 is the DEAD box element. A Helicase C-terminal domain is found at N257 to M417. The disordered stretch occupies residues E433–K489. Gly residues predominate over residues S469–R480.

This sequence belongs to the DEAD box helicase family. DDX47/RRP3 subfamily.

The protein resides in the nucleus. It carries out the reaction ATP + H2O = ADP + phosphate + H(+). In terms of biological role, probable ATP-dependent RNA helicase which may be involved in ribosome biogenesis. The protein is Putative ATP-dependent RNA helicase T26G10.1 of Caenorhabditis elegans.